Consider the following 335-residue polypeptide: Peroxidase 2 (335 aa).

The signal sequence occupies residues 1 to 29; the sequence is MAAATAPKTMPSSVFAAALLLLAAAACQA. Intrachain disulfides connect cysteine 44–cysteine 125, cysteine 77–cysteine 82, cysteine 131–cysteine 329, and cysteine 212–cysteine 238. Residue histidine 75 is the Proton acceptor of the active site. Residues aspartate 76, valine 79, glycine 81, aspartate 83, and serine 85 each contribute to the Ca(2+) site. N-linked (GlcNAc...) asparagine glycosylation is found at asparagine 166 and asparagine 180. Histidine 205 is a heme b binding site. Threonine 206 contacts Ca(2+). Asparagine 241 carries an N-linked (GlcNAc...) asparagine glycan. Positions 253, 256, and 261 each coordinate Ca(2+).

This sequence belongs to the peroxidase family. Classical plant (class III) peroxidase subfamily. Heme b is required as a cofactor. Ca(2+) serves as cofactor. In terms of tissue distribution, expressed in the elongating region of young roots, and in root vascular tissues and epidermis.

It is found in the secreted. The catalysed reaction is 2 a phenolic donor + H2O2 = 2 a phenolic radical donor + 2 H2O. Removal of H(2)O(2), oxidation of toxic reductants, biosynthesis and degradation of lignin, suberization, auxin catabolism, response to environmental stresses such as wounding, pathogen attack and oxidative stress. These functions might be dependent on each isozyme/isoform in each plant tissue. The sequence is that of Peroxidase 2 (PER2) from Zea mays (Maize).